A 210-amino-acid chain; its full sequence is Syntaxin-binding protein 6 (210 aa).

The residue at position 2 (serine 2) is an N-acetylserine. The 60-residue stretch at 151-210 (GNSILHSAADSVTSAVQKASQALNERGERLGRAEEKTEDLKNSAQQFAETAHKLAMKHKC) folds into the v-SNARE coiled-coil homology domain.

As to quaternary structure, part of a ternary complex containing SNAP25 and STX1A that can be dissociated by NAPA and NSF. Interacts with STX4A. As to expression, detected at low levels in brain, and at very low levels in heart, adrenal gland, testis, liver and kidney.

The protein localises to the cytoplasm. It is found in the membrane. Functionally, forms non-fusogenic complexes with SNAP25 and STX1A and may thereby modulate the formation of functional SNARE complexes and exocytosis. This chain is Syntaxin-binding protein 6 (STXBP6), found in Homo sapiens (Human).